Consider the following 677-residue polypeptide: Methionine--tRNA ligase (677 aa).

The 'HIGH' region motif lies at 15-25; sequence PYANGSIHLGH. Zn(2+) is bound by residues cysteine 146, cysteine 149, cysteine 159, and cysteine 162. The 'KMSKS' region signature appears at 333 to 337; the sequence is KMSKS. Lysine 336 is a binding site for ATP. In terms of domain architecture, tRNA-binding spans 575–677; that stretch reads DFAKVDLRVA…DGAKPGQQVK (103 aa).

It belongs to the class-I aminoacyl-tRNA synthetase family. MetG type 1 subfamily. In terms of assembly, homodimer. It depends on Zn(2+) as a cofactor.

Its subcellular location is the cytoplasm. It catalyses the reaction tRNA(Met) + L-methionine + ATP = L-methionyl-tRNA(Met) + AMP + diphosphate. In terms of biological role, is required not only for elongation of protein synthesis but also for the initiation of all mRNA translation through initiator tRNA(fMet) aminoacylation. In Citrobacter koseri (strain ATCC BAA-895 / CDC 4225-83 / SGSC4696), this protein is Methionine--tRNA ligase.